The chain runs to 203 residues: MIGRLRGIVLEKQPPLVLLEAGGVGYEVHMPMTCFYELPETGKEAVVFTHFVVREDAQLLFGFNNKQERTLFRELIKVNGVGPKLALAILSGMSAQQFVNAVEREEPAALVKLPGIGKKTAERLVVEMKDRFKGLHGDLFTPAADLVLTSPASPAVDDAEAEAVAALVSLGYKPQEASRMVSKVAQADASSETLIREALRAAL.

A domain I region spans residues 1-64 (MIGRLRGIVL…EDAQLLFGFN (64 aa)). The tract at residues 65 to 142 (NKQERTLFRE…KGLHGDLFTP (78 aa)) is domain II. The segment at 143 to 154 (AADLVLTSPASP) is flexible linker. A domain III region spans residues 155-203 (AVDDAEAEAVAALVSLGYKPQEASRMVSKVAQADASSETLIREALRAAL).

This sequence belongs to the RuvA family. Homotetramer. Forms an RuvA(8)-RuvB(12)-Holliday junction (HJ) complex. HJ DNA is sandwiched between 2 RuvA tetramers; dsDNA enters through RuvA and exits via RuvB. An RuvB hexamer assembles on each DNA strand where it exits the tetramer. Each RuvB hexamer is contacted by two RuvA subunits (via domain III) on 2 adjacent RuvB subunits; this complex drives branch migration. In the full resolvosome a probable DNA-RuvA(4)-RuvB(12)-RuvC(2) complex forms which resolves the HJ.

It is found in the cytoplasm. Functionally, the RuvA-RuvB-RuvC complex processes Holliday junction (HJ) DNA during genetic recombination and DNA repair, while the RuvA-RuvB complex plays an important role in the rescue of blocked DNA replication forks via replication fork reversal (RFR). RuvA specifically binds to HJ cruciform DNA, conferring on it an open structure. The RuvB hexamer acts as an ATP-dependent pump, pulling dsDNA into and through the RuvAB complex. HJ branch migration allows RuvC to scan DNA until it finds its consensus sequence, where it cleaves and resolves the cruciform DNA. In Cronobacter sakazakii (strain ATCC BAA-894) (Enterobacter sakazakii), this protein is Holliday junction branch migration complex subunit RuvA.